The following is a 1011-amino-acid chain: Protein FAM83B (1011 aa).

The interval 1–283 is DUF1669; that stretch reads METSSMLSSL…RTLYARSCVP (283 aa). The interval 1-284 is required for interaction with RAF1 and for the function; the sequence is METSSMLSSL…TLYARSCVPS (284 aa). A phosphoserine mark is found at serine 334, serine 422, serine 424, serine 466, and serine 543. A disordered region spans residues 555-585; it reads EVNSCTTGSSNSTIIGSQGSETPKEVPDTPT. Over residues 557–574 the composition is skewed to low complexity; the sequence is NSCTTGSSNSTIIGSQGS. Serine 664 carries the post-translational modification Phosphoserine. 2 disordered regions span residues 691-738 and 750-769; these read NRVR…TKSV and ESNK…SFLK. The span at 694–705 shows a compositional bias: basic and acidic residues; that stretch reads RQPEKPKEDLLK. Polar residues-rich tracts occupy residues 706 to 715 and 727 to 738; these read SSKSMHNVTH and RNSPSGTTTKSV. Basic and acidic residues predominate over residues 750–762; it reads ESNKELASKKEVK. Phosphothreonine is present on threonine 782. Serine 802 carries the phosphoserine modification. A disordered region spans residues 807–928; it reads LVSEGEENQK…TSSELLRSHS (122 aa). A compositionally biased stretch (basic and acidic residues) spans 813-828; sequence ENQKPKKSDTKVDSSP. A phosphoserine mark is found at serine 852, serine 869, and serine 915. The span at 913–923 shows a compositional bias: low complexity; the sequence is TSSPRPTSSEL.

This sequence belongs to the FAM83 family. In terms of assembly, interacts with EGFR; positively regulates EGFR inducing its autophosphorylation in absence of stimulation by EGF. Interacts with RAF1; displaces 14-3-3 proteins from RAF1 and activates RAF1 within the RAS/MAPK signaling cascade. Interacts with AKT1, PIK3CA and PIK3R1; activates the PI3K/AKT signaling cascade. Directly interacts (via DUF1669) with casein kinase isoforms CSNK1A1, CSNK1A1L, CSNK1D and CSNK1E. In terms of processing, phosphorylated in vitro by CSNK1A1.

It localises to the cytoplasm. The protein localises to the membrane. Its function is as follows. Probable proto-oncogene that functions in the epidermal growth factor receptor/EGFR signaling pathway. Activates both the EGFR itself and downstream RAS/MAPK and PI3K/AKT/TOR signaling cascades. In Homo sapiens (Human), this protein is Protein FAM83B.